The primary structure comprises 318 residues: NAD kinase (318 aa).

Residue Asp84 is the Proton acceptor of the active site. NAD(+) is bound by residues 84-85 (DG), Arg89, 159-160 (NE), Arg170, Asp189, and 200-205 (TAYAFS).

This sequence belongs to the NAD kinase family. It depends on a divalent metal cation as a cofactor.

The protein resides in the cytoplasm. It carries out the reaction NAD(+) + ATP = ADP + NADP(+) + H(+). Involved in the regulation of the intracellular balance of NAD and NADP, and is a key enzyme in the biosynthesis of NADP. Catalyzes specifically the phosphorylation on 2'-hydroxyl of the adenosine moiety of NAD to yield NADP. The polypeptide is NAD kinase (Cutibacterium acnes (strain DSM 16379 / KPA171202) (Propionibacterium acnes)).